The following is a 662-amino-acid chain: Protein Aster-C (662 aa).

Residues 1–33 (MEGALTARQIVNEGDSSLATELQEEPEESPGPV) form a disordered region. The GRAM domain maps to 70 to 176 (EYRQQFTHLP…LIIFRLWQNV (107 aa)). Positions 212–294 (VEENVQPRSP…EKRISRAPSK (83 aa)) are disordered. The segment covering 240–250 (VSFTQESVSRA) has biased composition (polar residues). Positions 265–276 (LGKEDSQSERNV) are enriched in basic and acidic residues. The 172-residue stretch at 326–497 (QGRLYINRVF…DLLMEESVLS (172 aa)) folds into the VASt domain. The interval 506–530 (HSSLRRRRRTLNRTAEPVPKLSSQR) is disordered. Residues 507-516 (SSLRRRRRTL) show a composition bias toward basic residues. The helical transmembrane segment at 557–577 (LIVVMSIFLLLLVLLNVTLFL) threads the bilayer.

Highly expressed in the liver. Also found in the testis.

The protein localises to the endoplasmic reticulum membrane. It localises to the cell membrane. Functionally, cholesterol transporter that mediates non-vesicular transport of cholesterol from the plasma membrane (PM) to the endoplasmic reticulum (ER). Contains unique domains for binding cholesterol and the PM, thereby serving as a molecular bridge for the transfer of cholesterol from the PM to the ER. Plays a crucial role in cholesterol homeostasis and has the unique ability to localize to the PM based on the level of membrane cholesterol. In lipid-poor conditions localizes to the ER membrane and in response to excess cholesterol in the PM is recruited to the endoplasmic reticulum-plasma membrane contact sites (EPCS) which is mediated by the GRAM domain. At the EPCS, the sterol-binding VASt/ASTER domain binds to the cholesterol in the PM and facilitates its transfer from the PM to ER. The protein is Protein Aster-C (Gramd1c) of Mus musculus (Mouse).